An 87-amino-acid polypeptide reads, in one-letter code: MKTIVCFLTILILVSSCESKNKKVVIIPGPKGERPDIKVVEGPSTVEDDFCYDCVRRCMVKGVGFYFRSCKGFVCRCYYPFMGGYGP.

An N-terminal signal peptide occupies residues 1-19; that stretch reads MKTIVCFLTILILVSSCES. Disulfide bonds link cysteine 51/cysteine 70, cysteine 54/cysteine 75, and cysteine 58/cysteine 77.

This sequence belongs to the DEFL family.

The protein resides in the secreted. The polypeptide is Defensin-like protein 218 (Arabidopsis thaliana (Mouse-ear cress)).